The chain runs to 121 residues: Huntingtin-interacting protein K (121 aa).

Acidic residues predominate over residues 1–13 (MATEGDVELELET). Residues 1-75 (MATEGDVELE…EQKAKQEREK (75 aa)) are disordered. Composition is skewed to basic and acidic residues over residues 20 to 47 (RPPEKPRKHDSGAADLERVTDYAEEKEI) and 60 to 75 (GDRRSREQKAKQEREK). S30 carries the phosphoserine modification. Residues 52 to 121 (LETAMSVIGD…VVEALIALTN (70 aa)) are required for association with the NAA10-NAA15 complex. Positions 62-107 (RRSREQKAKQEREKELAKVTIKKEDLELIMTEMEISRAAAERSLRE) form a coiled coil.

Component of the N-terminal acetyltransferase A (NatA)/HYPK complex at least composed of NAA10, NAA15 and HYPK, which has N-terminal acetyltransferase activity. Within the complex interacts with NAA10. Within the complex interacts with NAA15. Predominantly interacts with NAA15 in the NAA10-NAA15 complex (also called the NatA complex); the interaction with the NatA complex reduces the acetylation activity of the NatA complex. Interacts with HTT (via N-terminus). The NatA complex is required for HYPK stability and for reducing polyQ aggregation of HTT. Component of the N-terminal acetyltransferase E (NatE)/HYPK complex at least composed of NAA10, NAA15, NAA50 and HYPK. Within the complex interacts with NAA10 and NAA15. Does not interact with NAA50. Interaction with NAA15 reduces the capacity of NAA15 to interact with NAA50. Its capacity to interact with the NatA complex is reduced by NAA50. Does not interact with the N-terminal acetyltransferase B (NatB) complex component NAA25 or the N-terminal acetyltransferase C (NatC) complex component NAA35.

Its subcellular location is the nucleus. It is found in the cytoplasm. Component of several N-terminal acetyltransferase complexes. Inhibits the N-terminal acetylation activity of the N-terminal acetyltransferase NAA10-NAA15 complex (also called the NatA complex). Has chaperone-like activity preventing polyglutamine (polyQ) aggregation of HTT in neuronal cells probably while associated with the NatA complex. May play a role in the NatA complex-mediated N-terminal acetylation of PCNP. This Homo sapiens (Human) protein is Huntingtin-interacting protein K.